Consider the following 426-residue polypeptide: Serine protease HTRA2, mitochondrial (426 aa).

The segment covering 31 to 58 (SSTCNSTNTDNGSHNTNYNSSNNNNNNN) has biased composition (low complexity). The tract at residues 31-59 (SSTCNSTNTDNGSHNTNYNSSNNNNNNND) is disordered. Residues 71 to 87 (FLVPFSLGALASSVVAG) traverse the membrane as a helical segment. Residues 79-82 (ALAS) carry the IAP-binding motif. The serine protease stretch occupies residues 143 to 306 (SNGSGFVIEQ…IPIDYVKLFL (164 aa)). Catalysis depends on charge relay system residues histidine 161, aspartate 193, and serine 270. The PDZ domain maps to 329 to 414 (MGITMLTLTP…DLDMVILRGV (86 aa)).

This sequence belongs to the peptidase S1C family. Interacts with th/DIAP1 (via BIR 2 domain).

Its subcellular location is the mitochondrion intermembrane space. It localises to the mitochondrion membrane. The enzyme catalyses Cleavage of non-polar aliphatic amino-acids at the P1 position, with a preference for Val, Ile and Met. At the P2 and P3 positions, Arg is selected most strongly with a secondary preference for other hydrophilic residues.. Its function is as follows. Serine protease that shows proteolytic activity against a non-specific substrate beta-casein. Promotes or induces cell death either by direct binding to and inhibition of BIRC proteins (also called inhibitor of apoptosis proteins, IAPs), leading to an increase in caspase activity, or by a BIRC inhibition-independent, caspase-independent and serine protease activity-dependent mechanism. Can antagonize antiapoptotic activity of th/Diap1 by directly inducing the degradation of th/Diap1. This is Serine protease HTRA2, mitochondrial from Drosophila grimshawi (Hawaiian fruit fly).